We begin with the raw amino-acid sequence, 78 residues long: UPF0369 protein RP167 (78 aa).

It belongs to the SDHAF4 family.

This Rickettsia prowazekii (strain Madrid E) protein is UPF0369 protein RP167.